We begin with the raw amino-acid sequence, 485 residues long: MDFTNYKAHELKDLISKKEVSVEEVTKAHLENVKNIDAKVNAFLYIAEEEALNDAKALDEKLSKGEDIGLLGGAPLGIKDNISVKNMQNTCASKILEGYISPYDATVSESVKSQGGVILGKLNMDEFAMGSSTENSAYKITRNPWDLDRVPGGSSGGSAAAVASKEVPLALGTDTGGSVRQPASFCGIVGLKPTYGRVSRSGVVAYGSTLDQVGTLGRDVKDCALLTQVISGVDHRDFTTANINVPNYENSLSENIKGKKIALPKEFFKDGLDPKVQKSIYDALEVFKANGAEITEVSLPLADYAISAYYLLACAEASSNLARFDGVRYGHRSESVEDAVDVYFKSRSEAFGKEVKKRIMLGTYALSAGYYDAYYKKALKVRNLIKGEFENIFKDFDAIISPTAPTPAYKIGEKTENALEMYLGDIYTVPVNIAGIPAISLPCGVADGLPVGLQIMGNYFKEDTLFNLAYSYEQSTKWHEMHPNL.

Active-site charge relay system residues include Lys-79 and Ser-154. The Acyl-ester intermediate role is filled by Ser-178.

Belongs to the amidase family. GatA subfamily. As to quaternary structure, heterotrimer of A, B and C subunits.

It carries out the reaction L-glutamyl-tRNA(Gln) + L-glutamine + ATP + H2O = L-glutaminyl-tRNA(Gln) + L-glutamate + ADP + phosphate + H(+). Its function is as follows. Allows the formation of correctly charged Gln-tRNA(Gln) through the transamidation of misacylated Glu-tRNA(Gln) in organisms which lack glutaminyl-tRNA synthetase. The reaction takes place in the presence of glutamine and ATP through an activated gamma-phospho-Glu-tRNA(Gln). In Clostridium botulinum (strain Alaska E43 / Type E3), this protein is Glutamyl-tRNA(Gln) amidotransferase subunit A.